The primary structure comprises 445 residues: FAS-associated factor 2-B (445 aa).

The UBA domain maps to 12–48 (DQTEKLLQFQDLTGIESIDQCRQTLQQHNWNIETAVQ). Positions 275-353 (SERLEREERN…ERKSECLPAE (79 aa)) form a coiled coil. A disordered region spans residues 302 to 355 (RADQEKERKKKEKQDQKRREEEEAQRKQMLEERKKRNLEEEKERKSECLPAEPV). Residues 303–348 (ADQEKERKKKEKQDQKRREEEEAQRKQMLEERKKRNLEEEKERKSE) show a composition bias toward basic and acidic residues. One can recognise a UBX domain in the interval 357–439 (DHPDNVKIIF…GLSQSQLLFV (83 aa)).

It localises to the cytoplasm. The protein localises to the lipid droplet. It is found in the endoplasmic reticulum. In terms of biological role, plays an important role in endoplasmic reticulum-associated degradation (ERAD) that mediates ubiquitin-dependent degradation of misfolded endoplasmic reticulum proteins. Involved in inhibition of lipid droplet degradation. Involved in stress granule disassembly. The polypeptide is FAS-associated factor 2-B (faf2-b) (Xenopus laevis (African clawed frog)).